Reading from the N-terminus, the 687-residue chain is Dictomallein (687 aa).

Disordered regions lie at residues 1 to 45 and 73 to 112; these read MGNG…SRRL and TAGGAAPLTPAVASPAGPTGSTPGSTPGATTAPAPSSTSA. The Peptidase M66 domain maps to 233–501; it reads PVFGTDADVQ…QAWIASRVLA (269 aa). His393 is a Zn(2+) binding site. The active site involves Glu394. Zn(2+) contacts are provided by His397 and His403.

Belongs to the dictomallein family. Zn(2+) is required as a cofactor.

The chain is Dictomallein (dtmL) from Burkholderia pseudomallei (strain 668).